We begin with the raw amino-acid sequence, 279 residues long: Urease accessory protein UreD (279 aa).

This sequence belongs to the UreD family. As to quaternary structure, ureD, UreF and UreG form a complex that acts as a GTP-hydrolysis-dependent molecular chaperone, activating the urease apoprotein by helping to assemble the nickel containing metallocenter of UreC. The UreE protein probably delivers the nickel.

It is found in the cytoplasm. Functionally, required for maturation of urease via the functional incorporation of the urease nickel metallocenter. This is Urease accessory protein UreD from Rhodopseudomonas palustris (strain HaA2).